Consider the following 454-residue polypeptide: UPF0210 protein EUBELI_01067 (454 aa).

Belongs to the UPF0210 family. Homodimer.

The sequence is that of UPF0210 protein EUBELI_01067 from Lachnospira eligens (strain ATCC 27750 / DSM 3376 / VPI C15-48 / C15-B4) (Eubacterium eligens).